The sequence spans 317 residues: Methionyl-tRNA formyltransferase (317 aa).

112–115 is a binding site for (6S)-5,6,7,8-tetrahydrofolate; that stretch reads SLLP.

It belongs to the Fmt family.

The enzyme catalyses L-methionyl-tRNA(fMet) + (6R)-10-formyltetrahydrofolate = N-formyl-L-methionyl-tRNA(fMet) + (6S)-5,6,7,8-tetrahydrofolate + H(+). Functionally, attaches a formyl group to the free amino group of methionyl-tRNA(fMet). The formyl group appears to play a dual role in the initiator identity of N-formylmethionyl-tRNA by promoting its recognition by IF2 and preventing the misappropriation of this tRNA by the elongation apparatus. The polypeptide is Methionyl-tRNA formyltransferase (Mesorhizobium japonicum (strain LMG 29417 / CECT 9101 / MAFF 303099) (Mesorhizobium loti (strain MAFF 303099))).